Reading from the N-terminus, the 309-residue chain is Ribonuclease Z (309 aa).

7 residues coordinate Zn(2+): His63, His65, Asp67, His68, His145, Asp216, and His274. Residue Asp67 is the Proton acceptor of the active site.

This sequence belongs to the RNase Z family. Homodimer. The cofactor is Zn(2+).

The catalysed reaction is Endonucleolytic cleavage of RNA, removing extra 3' nucleotides from tRNA precursor, generating 3' termini of tRNAs. A 3'-hydroxy group is left at the tRNA terminus and a 5'-phosphoryl group is left at the trailer molecule.. Zinc phosphodiesterase, which displays some tRNA 3'-processing endonuclease activity. Probably involved in tRNA maturation, by removing a 3'-trailer from precursor tRNA. The chain is Ribonuclease Z from Streptococcus suis (strain 98HAH33).